The following is a 2175-amino-acid chain: MGAQLSRNTAGSHTTGTYATGGSTINYNNINYYSHAASAAQNKQDFTQDPSKFTQPIADVIKETAVPLKSPSAEACGYSDRVAQLTLGNSTITTQEAANICVAYGCWPAKLSDTDATSVDKPTEPGVSADAFYTLRSKPWQADSKGWYWKLPDALNNTGMFGQNAQFHYIYRGGWAVHVQCNATKFHQGTLLVLAIPEHQIATQEQPAFDRTMPGSEGGTFQEPFWLEDGTSLGNSLIYPHQWINLRTNNSATLILPYVNAIPMDSAIRHSNWTLAIIPVAPLKYAAETTPLVPITVTIAPMETEYNGLRRAIASNQGLPTKPGPGSYQFMTTDEDCSPCILPDFQPTLEIFIPGKVNNLLEIAQVESILEANNREGVEGVERYVIPVSVQDALDAQIYALRLELGGSGPLSSSLLGTLAKHYTQWSGSVEITCMFTGTFMTTGKVLLAYTPPGGDMPRNREEAMLGTHVVWDFGLQSSITLVIPWISASHFRGVSNDDVLNYQYYAAGHVTIWYQTNMVIPPGFPNTAGIIMMIAAQPNFSFRIQKDREDMTQTAILQNDPGKMLKDAIDKQVAGALVAGTTTSTHSVATDSTPALQAAETGATSTARDESMIETRTIVPTHGIHETSVESFFGRSSLVGMPLLATGTSITNWRIDFREFVQLRAKMSWFTYMRFDVEFTIIATSSTGQNVTTEQHTTYQVMYVPPGAPVPSNQDSFQWQSGCNPSVFADTDGPPAQFSVPFMSSANAYSTVYDGYARFMDTDPDRYGILPSNFLGFMYFRTLEDAAHQVRFRICAKIKHTSCWIPRAPRQAPYKKRYNLVFSGDSDRICSNRASLTSYGPFGQQQGAAYVGSYKILNRHLATYADWENEVWQSYQRDLLVTRVDAHGCDTIARCNCRSGIYYCKSTAKHYPIVVTPPSIYKIEANDYYPERMQTHILLGIGFAEPGDCGGLLRCEHGVMGILTVGGGDHVGFADVRDLLWIEDDAMEQGITDYVQQLGNAFGAGFTAEIANYTNQLRDMLMGSDSVVEKIIRSLVRLVSALVIVVRNHQDLITVGATLALLGCEGSPWKWLKRKVCQILGINMAERQSDNWMKKFTEMCNAFRGLDWIAAKISKFIDWLKQKILPELKERAEFVKKLKQLPLLEAQVNTLEHSSASQERQEQLFGNVQYLAHHCRKNAPLYAAEAKRVYHLEKRVLGAMQFKTKNRIEPVCALIHGSPGTGQSLATMIVGRKLAEYEGSDVYSLPPDPDHFDGYQQQAVVVMDDLLQNPDGKDMTLFCQMVSTAPFTVPMAALEDKGKLFTSKFVLASTNAGQVTPPTVADYKALQRRFFFDCDIEVQKEYKRDGVTLDVAKATETCEDCSPANFKKCMPLICGKALQLKSRKGDGMRYSLDTLISELRRESNRRYNIGNVLEALFQGPVCYKPLRIEVHEEEPAPSAISDLLQAVDSEEVREYCRSKGWIVEERVTELKLERNVNRALAVIQSVSLIAAVAGTIYIVYRLFSGMQGPYSGIGTNYATKKPVVRQVQTQGPLFDFGVSLLKKNIRTVKTGAGEFTALGVYDTVVVLPRHAMPGKTIEMNGKDIEVLDAYDLNDKTDTSLELTIVKLKMNEKFRDIRAMVPDQITDYNEAVVVVNTSYYPQLFTCVGRVKDYGFLNLAGRPTHRVLMYEFPTKAGQCGGVVISMGKIVGVHVGGNGAQGFAASLLRRYFTAEQGQIEYIEKSKDAGYPVINAPTQTKLEPSVFFDVFPGVKEPAVLHKKDKRLETNFEEALFSKYIGNVQRDMPEELLIAIDHYSEQLKMLNIDPRPISMEDAIYGTEGLEALDLGTSASYPYVAMGIKKRDILNKETRDVTKMQECIDKYGLNLPMVTYVKDELRAPDKIRKGKSRLIEASSLNDSVAMRCYFGNLYKVFHTNPGTISGCAVGCDPETFWSKIPVMMDGELFGFDYTAYDASLSPMWFHALAEVLRRIGFVECKHFIDQLCCSHHLYMDKHYYVVGGMPSGCSGTSIFNSMINNLIIRTLVLTVYKNIDLDDLKIIAYGDDVLASYPYEIDASLLAEAGKSFGLIMTPPDKSAEFVKLTWDNVTFLKRKFVRDARYPFLVHPVMDMSNIHESIRWTKDPRHTEDHVRSLCLLAWHCGEEEYNEFVTKIRSVPVGRALHLPSFKALERKWYDSF.

A lipid anchor (N-myristoyl glycine; by host) is attached at Gly-2. Topologically, residues 2 to 1485 (GAQLSRNTAG…NVNRALAVIQ (1484 aa)) are cytoplasmic. Amphipathic alpha-helix stretches follow at residues 557–574 (ILQN…DKQV) and 560–581 (NDPG…LVAG). Catalysis depends on for protease 2A activity residues His-861 and Asp-879. Zn(2+)-binding residues include Cys-896 and Cys-898. The active-site For protease 2A activity is the Cys-950. Zn(2+) is bound by residues Cys-956 and His-958. Residues 1090–1162 (SDNWMKKFTE…EHSSASQERQ (73 aa)) form a membrane-binding region. The oligomerization stretch occupies residues 1090-1228 (SDNWMKKFTE…SPGTGQSLAT (139 aa)). Positions 1111-1115 (AAKIS) are RNA-binding. One can recognise an SF3 helicase domain in the interval 1194-1352 (EKRVLGAMQF…YKRDGVTLDV (159 aa)). 3 residues coordinate Zn(2+): Cys-1359, Cys-1370, and Cys-1375. The segment at 1359–1375 (CEDCSPANFKKCMPLIC) adopts a C4-type; degenerate zinc-finger fold. The segment at 1403–1410 (ESNRRYNI) is RNA-binding. Residues 1414 to 1419 (LEALFQ) are oligomerization. An intramembrane segment occupies 1486-1501 (SVSLIAAVAGTIYIVY). Over 1502–2175 (RLFSGMQGPY…ALERKWYDSF (674 aa)) the chain is Cytoplasmic. O-(5'-phospho-RNA)-tyrosine is present on Tyr-1511. The Peptidase C3 domain maps to 1532-1710 (GPLFDFGVSL…FAASLLRRYF (179 aa)). Catalysis depends on for protease 3C activity residues His-1571, Glu-1602, and Cys-1678. Residues 1941-2056 (GELFGFDYTA…SYPYEIDASL (116 aa)) form the RdRp catalytic domain. Asp-1947 and Asp-2042 together coordinate Mg(2+).

The protein belongs to the picornaviruses polyprotein family. In terms of assembly, interacts with capsid protein VP1 and capsid protein VP3 to form heterotrimeric protomers. As to quaternary structure, interacts with capsid protein VP0, and capsid protein VP3 to form heterotrimeric protomers. Five protomers subsequently associate to form pentamers which serve as building blocks for the capsid. Interacts with capsid protein VP2, capsid protein VP3 and capsid protein VP4 following cleavage of capsid protein VP0. Interacts with capsid protein VP1 and capsid protein VP3 in the mature capsid. In terms of assembly, interacts with capsid protein VP0 and capsid protein VP1 to form heterotrimeric protomers. Five protomers subsequently associate to form pentamers which serve as building blocks for the capsid. Interacts with capsid protein VP4 in the mature capsid. Interacts with protein 2C; this interaction may be important for virion morphogenesis. As to quaternary structure, interacts with capsid protein VP1 and capsid protein VP3. Homodimer. In terms of assembly, homohexamer; forms a hexameric ring structure with 6-fold symmetry characteristic of AAA+ ATPases. Interacts (via N-terminus) with host RTN3 (via reticulon domain); this interaction is important for viral replication. Interacts with capsid protein VP3; this interaction may be important for virion morphogenesis. As to quaternary structure, interacts with protein 3CD. Homodimer. Interacts with host GBF1. Interacts (via GOLD domain) with host ACBD3 (via GOLD domain); this interaction allows the formation of a viral protein 3A/ACBD3 heterotetramer with a 2:2 stoichiometry, which will stimulate the recruitment of host PI4KB in order to synthesize PI4P at the viral RNA replication sites. In terms of assembly, interacts with RNA-directed RNA polymerase. As to quaternary structure, interacts with protein 3AB and with RNA-directed RNA polymerase. Interacts with Viral protein genome-linked and with protein 3CD. Mg(2+) serves as cofactor. In terms of processing, specific enzymatic cleavages in vivo by the viral proteases yield processing intermediates and the mature proteins. Myristoylation is required for the formation of pentamers during virus assembly. Further assembly of 12 pentamers and a molecule of genomic RNA generates the provirion. Post-translationally, during virion maturation, immature virions are rendered infectious following cleavage of VP0 into VP4 and VP2. This maturation seems to be an autocatalytic event triggered by the presence of RNA in the capsid and it is followed by a conformational change infectious virion. In terms of processing, myristoylation is required during RNA encapsidation and formation of the mature virus particle. VPg is uridylylated by the polymerase into VPg-pUpU. This acts as a nucleotide-peptide primer for the genomic RNA replication.

The protein localises to the virion. The protein resides in the host cytoplasm. It localises to the host cytoplasmic vesicle membrane. It is found in the host nucleus. It catalyses the reaction a ribonucleoside 5'-triphosphate + H2O = a ribonucleoside 5'-diphosphate + phosphate + H(+). The catalysed reaction is Selective cleavage of Tyr-|-Gly bond in the picornavirus polyprotein.. It carries out the reaction RNA(n) + a ribonucleoside 5'-triphosphate = RNA(n+1) + diphosphate. The enzyme catalyses Selective cleavage of Gln-|-Gly bond in the poliovirus polyprotein. In other picornavirus reactions Glu may be substituted for Gln, and Ser or Thr for Gly.. With respect to regulation, replication or transcription is subject to high level of random mutations by the nucleotide analog ribavirin. Its function is as follows. Forms an icosahedral capsid of pseudo T=3 symmetry with capsid proteins VP2 and VP3. The capsid is 300 Angstroms in diameter, composed of 60 copies of each capsid protein and enclosing the viral positive strand RNA genome. Capsid protein VP1 mainly forms the vertices of the capsid. Capsid protein VP1 interacts with host cell receptor to provide virion attachment to target host cells. This attachment induces virion internalization. Tyrosine kinases are probably involved in the entry process. After binding to its receptor, the capsid undergoes conformational changes. Capsid protein VP1 N-terminus (that contains an amphipathic alpha-helix) and capsid protein VP4 are externalized. Together, they shape a pore in the host membrane through which viral genome is translocated to host cell cytoplasm. In terms of biological role, forms an icosahedral capsid of pseudo T=3 symmetry with capsid proteins VP2 and VP3. The capsid is 300 Angstroms in diameter, composed of 60 copies of each capsid protein and enclosing the viral positive strand RNA genome. Functionally, lies on the inner surface of the capsid shell. After binding to the host receptor, the capsid undergoes conformational changes. Capsid protein VP4 is released, Capsid protein VP1 N-terminus is externalized, and together, they shape a pore in the host membrane through which the viral genome is translocated into the host cell cytoplasm. Component of immature procapsids, which is cleaved into capsid proteins VP4 and VP2 after maturation. Allows the capsid to remain inactive before the maturation step. Its function is as follows. Cysteine protease that cleaves viral polyprotein and specific host proteins. It is responsible for the autocatalytic cleavage between the P1 and P2 regions, which is the first cleavage occurring in the polyprotein. Also cleaves the host translation initiation factor EIF4G1, in order to shut down the capped cellular mRNA translation. Inhibits the host nucleus-cytoplasm protein and RNA trafficking by cleaving host members of the nuclear pores. Counteracts stress granule formation probably by antagonizing its assembly or promoting its dissassembly. In terms of biological role, plays an essential role in the virus replication cycle by acting as a viroporin. Creates a pore in the host endoplasmic reticulum and as a consequence releases Ca2+ in the cytoplasm of infected cell. In turn, high levels of cytoplasmic calcium may trigger membrane trafficking and transport of viral ER-associated proteins to viroplasms, sites of viral genome replication. Functionally, induces and associates with structural rearrangements of intracellular membranes. Displays RNA-binding, nucleotide binding and NTPase activities. May play a role in virion morphogenesis and viral RNA encapsidation by interacting with the capsid protein VP3. Localizes the viral replication complex to the surface of membranous vesicles. Together with protein 3CD binds the Cis-Active RNA Element (CRE) which is involved in RNA synthesis initiation. Acts as a cofactor to stimulate the activity of 3D polymerase, maybe through a nucleid acid chaperone activity. Its function is as follows. Localizes the viral replication complex to the surface of membranous vesicles. It inhibits host cell endoplasmic reticulum-to-Golgi apparatus transport and causes the disassembly of the Golgi complex, possibly through GBF1 interaction. This would result in depletion of MHC, trail receptors and IFN receptors at the host cell surface. Plays an essential role in viral RNA replication by recruiting ACBD3 and PI4KB at the viral replication sites, thereby allowing the formation of the rearranged membranous structures where viral replication takes place. In terms of biological role, acts as a primer for viral RNA replication and remains covalently bound to viral genomic RNA. VPg is uridylylated prior to priming replication into VPg-pUpU. The oriI viral genomic sequence may act as a template for this. The VPg-pUpU is then used as primer on the genomic RNA poly(A) by the RNA-dependent RNA polymerase to replicate the viral genome. During genome replication, the VPg-RNA linkage is removed by the host TDP2, thereby accelerating replication. During the late stage of the replication cycle, host TDP2 is excluded from sites of viral RNA synthesis and encapsidation, allowing for the generation of progeny virions. Functionally, involved in the viral replication complex and viral polypeptide maturation. It exhibits protease activity with a specificity and catalytic efficiency that is different from protease 3C. Protein 3CD lacks polymerase activity. Protein 3CD binds to the 5'UTR of the viral genome. Replicates the viral genomic RNA on the surface of intracellular membranes. May form linear arrays of subunits that propagate along a strong head-to-tail interaction called interface-I. Covalently attaches UMP to a tyrosine of VPg, which is used to prime RNA synthesis. The positive stranded RNA genome is first replicated at virus induced membranous vesicles, creating a dsRNA genomic replication form. This dsRNA is then used as template to synthesize positive stranded RNA genomes. ss(+)RNA genomes are either translated, replicated or encapsidated. Its function is as follows. Major viral protease that mediates proteolytic processing of the polyprotein. Cleaves host EIF5B, contributing to host translation shutoff. Also cleaves host PABPC1, contributing to host translation shutoff. Cleaves host NLRP1, triggers host N-glycine-mediated degradation of the autoinhibitory NLRP1 N-terminal fragment. The protein is Genome polyprotein of Bos taurus (Bovine).